Reading from the N-terminus, the 422-residue chain is Serine hydroxymethyltransferase 2 (422 aa).

(6S)-5,6,7,8-tetrahydrofolate-binding positions include L121 and 125–127 (GHL). K230 carries the N6-(pyridoxal phosphate)lysine modification.

The protein belongs to the SHMT family. Homodimer. Requires pyridoxal 5'-phosphate as cofactor.

The protein resides in the cytoplasm. The catalysed reaction is (6R)-5,10-methylene-5,6,7,8-tetrahydrofolate + glycine + H2O = (6S)-5,6,7,8-tetrahydrofolate + L-serine. It functions in the pathway one-carbon metabolism; tetrahydrofolate interconversion. The protein operates within amino-acid biosynthesis; glycine biosynthesis; glycine from L-serine: step 1/1. Functionally, catalyzes the reversible interconversion of serine and glycine with tetrahydrofolate (THF) serving as the one-carbon carrier. This reaction serves as the major source of one-carbon groups required for the biosynthesis of purines, thymidylate, methionine, and other important biomolecules. Also exhibits THF-independent aldolase activity toward beta-hydroxyamino acids, producing glycine and aldehydes, via a retro-aldol mechanism. The chain is Serine hydroxymethyltransferase 2 from Agrobacterium fabrum (strain C58 / ATCC 33970) (Agrobacterium tumefaciens (strain C58)).